Consider the following 47-residue polypeptide: Protein YqhI (47 aa).

This is Protein YqhI from Escherichia coli (strain K12).